The primary structure comprises 440 residues: Cytochrome c biogenesis protein Ccs1 (440 aa).

Transmembrane regions (helical) follow at residues 25 to 45 (LQFS…GTVI), 84 to 104 (TWWF…CSIS), and 170 to 190 (LAPI…VLGL).

It belongs to the Ccs1/CcsB family. As to quaternary structure, may interact with CcsA.

The protein resides in the plastid. It localises to the chloroplast thylakoid membrane. Functionally, required during biogenesis of c-type cytochromes (cytochrome c6 and cytochrome f) at the step of heme attachment. This Pyropia yezoensis (Susabi-nori) protein is Cytochrome c biogenesis protein Ccs1.